A 270-amino-acid polypeptide reads, in one-letter code: Hydroxyethylthiazole kinase (270 aa).

Residue Met46 participates in substrate binding. Positions 120 and 166 each coordinate ATP. Gly193 serves as a coordination point for substrate.

This sequence belongs to the Thz kinase family. Mg(2+) is required as a cofactor.

It catalyses the reaction 5-(2-hydroxyethyl)-4-methylthiazole + ATP = 4-methyl-5-(2-phosphooxyethyl)-thiazole + ADP + H(+). It participates in cofactor biosynthesis; thiamine diphosphate biosynthesis; 4-methyl-5-(2-phosphoethyl)-thiazole from 5-(2-hydroxyethyl)-4-methylthiazole: step 1/1. Functionally, catalyzes the phosphorylation of the hydroxyl group of 4-methyl-5-beta-hydroxyethylthiazole (THZ). The sequence is that of Hydroxyethylthiazole kinase from Herpetosiphon aurantiacus (strain ATCC 23779 / DSM 785 / 114-95).